We begin with the raw amino-acid sequence, 331 residues long: Ribosomal RNA small subunit methyltransferase H (331 aa).

S-adenosyl-L-methionine contacts are provided by residues 38–40 (GGY), aspartate 56, phenylalanine 83, aspartate 100, and glutamine 107. The segment at 289–331 (AELAENPRARSARLRVGVRTDAPAGKVDPQALGTPLIPKKGRR) is disordered.

The protein belongs to the methyltransferase superfamily. RsmH family.

Its subcellular location is the cytoplasm. It carries out the reaction cytidine(1402) in 16S rRNA + S-adenosyl-L-methionine = N(4)-methylcytidine(1402) in 16S rRNA + S-adenosyl-L-homocysteine + H(+). In terms of biological role, specifically methylates the N4 position of cytidine in position 1402 (C1402) of 16S rRNA. The chain is Ribosomal RNA small subunit methyltransferase H from Cereibacter sphaeroides (strain ATCC 17029 / ATH 2.4.9) (Rhodobacter sphaeroides).